A 138-amino-acid chain; its full sequence is Actophorin (138 aa).

The 132-residue stretch at 3-134 folds into the ADF-H domain; the sequence is GIQLADEVTS…NLDEVIAKVK (132 aa).

The protein belongs to the actin-binding proteins ADF family. Interacts with F-actin. Does not interact with G-actin. Interacts with 14-3-3 protein 3.

The protein resides in the cytoplasm. Its subcellular location is the cytoskeleton. The protein localises to the cell membrane. It localises to the cell projection. It is found in the phagocytic cup. The protein resides in the pseudopodium. In terms of biological role, actin-binding protein that severs actin filaments. The polypeptide is Actophorin (Entamoeba histolytica (strain ATCC 30459 / HM-1:IMSS / ABRM)).